Here is a 492-residue protein sequence, read N- to C-terminus: KRAB-A domain-containing protein 2 (492 aa).

The KRAB domain maps to Leu36–Thr117. Residue Ser115 is modified to Phosphoserine. Thr117 bears the Phosphothreonine mark. In terms of domain architecture, Integrase catalytic spans Arg247–Lys415. Residues Arg427–Arg457 adopt a coiled-coil conformation. The span at Glu455–Ser465 shows a compositional bias: basic and acidic residues. The disordered stretch occupies residues Glu455–Trp492. A compositionally biased stretch (polar residues) spans Glu479–Trp492.

The polypeptide is KRAB-A domain-containing protein 2 (KRBA2) (Homo sapiens (Human)).